The sequence spans 396 residues: Elongation factor Tu (396 aa).

The tr-type G domain maps to 10 to 205; that stretch reads KPHVNIGTIG…AVDESIPDPV (196 aa). The segment at 19-26 is G1; sequence GHVDHGKT. A GTP-binding site is contributed by 19–26; the sequence is GHVDHGKT. Threonine 26 lines the Mg(2+) pocket. The tract at residues 62–66 is G2; the sequence is GITIN. Residues 83-86 are G3; that stretch reads DAPG. GTP is bound by residues 83–87 and 138–141; these read DAPGH and NKAD. A G4 region spans residues 138–141; the sequence is NKAD. The tract at residues 175–177 is G5; that stretch reads SAL.

It belongs to the TRAFAC class translation factor GTPase superfamily. Classic translation factor GTPase family. EF-Tu/EF-1A subfamily. As to quaternary structure, monomer.

Its subcellular location is the cytoplasm. It catalyses the reaction GTP + H2O = GDP + phosphate + H(+). GTP hydrolase that promotes the GTP-dependent binding of aminoacyl-tRNA to the A-site of ribosomes during protein biosynthesis. The polypeptide is Elongation factor Tu (Mycobacterium avium (strain 104)).